A 386-amino-acid chain; its full sequence is D-amino-acid oxidase (386 aa).

9 residues coordinate FAD: glycine 14, glycine 15, valine 16, valine 17, glutamate 39, arginine 40, alanine 51, glycine 52, and glycine 53. The interval 109–138 (SSSPPHPLLPPWVDPSASAAPPRELGTPDT) is disordered. Residues 112–121 (PPHPLLPPWV) are compositionally biased toward pro residues. Residues arginine 174, valine 175, and alanine 176 each contribute to the FAD site. D-serine is bound by residues tyrosine 253, tyrosine 261, and lysine 332. Positions 261 and 332 each coordinate D-proline. FAD is bound by residues lysine 332, glycine 344, isoleucine 345, glycine 362, and alanine 364. Lysine 332 serves as a coordination point for D-dopa. Residue glycine 362 coordinates D-serine. D-proline is bound at residue glycine 362. Glycine 362 contacts D-dopa.

This sequence belongs to the DAMOX/DASOX family.

It catalyses the reaction a D-alpha-amino acid + O2 + H2O = a 2-oxocarboxylate + H2O2 + NH4(+). It carries out the reaction D-alanine + O2 + H2O = pyruvate + H2O2 + NH4(+). The catalysed reaction is D-aspartate + O2 + H2O = oxaloacetate + H2O2 + NH4(+). Catalyzes the oxidative deamination of D-amino acids with broad substrate specificity. Enables the organism to utilize D-amino acids as a source of nutrients. The protein is D-amino-acid oxidase of Zea mays (Maize).